Reading from the N-terminus, the 951-residue chain is Zinc fingers and homeoboxes protein 3 (951 aa).

Residues 1 to 66 (MASKRKSTTP…SSTDGSALAN (66 aa)) are disordered. A compositionally biased stretch (low complexity) spans 42–58 (PSEAPEASSEAAPNPSS). C2H2-type zinc fingers lie at residues 77–100 (YSCK…TSEH) and 109–132 (FVCT…AKCH). A disordered region spans residues 198–249 (KENAPTQPGGEALPKPLAGETEGKEGDHTFINGATPVSQASANSTKPPHTAN). Polar residues predominate over residues 232 to 244 (TPVSQASANSTKP). The segment at 237-481 (ASANSTKPPH…LLTACPSITS (245 aa)) is required for homodimerization and interaction with NFYA. A required for repressor activity region spans residues 297–495 (LSSIPTYNAA…DANIYKNKKS (199 aa)). 2 DNA-binding regions (homeobox) span residues 298–357 (SSIP…GISW) and 487–546 (ANIY…RNLK). The tract at residues 490–548 (YKNKKSHEQLSALKGSFCRNQFPGQSEVEHLTKVTGLSTREVRKWFSDRRYHCRNLKGT) is required for nuclear localization. Ser597 carries the phosphoserine modification. The homeobox 3 DNA-binding region spans 605–664 (TPTKYKERAPEQLRVLESSFAQNPLPPEEELDRLRSETKMTRREIDGWFSERRKRVNAEE). Disordered regions lie at residues 621 to 642 (ESSF…RSET) and 661 to 702 (NAEE…NGSS). Positions 661–674 (NAEETKKADGHAPQ) are enriched in basic and acidic residues. The segment covering 675–690 (EEAEGAEEEGRDEELA) has biased composition (acidic residues). 2 positions are modified to phosphoserine: Ser701 and Ser716. 2 consecutive DNA-binding regions (homeobox) follow at residues 759-818 (PSRV…KNGQ) and 830-889 (FPPG…TRAV). The segment at 885 to 951 (ETRAVADTSS…PQSGRQLETD (67 aa)) is disordered. Ser922 and Ser941 each carry phosphoserine. Over residues 937 to 951 (FDTSSPQSGRQLETD) the composition is skewed to polar residues.

This sequence belongs to the ZHX family. Homodimer (via homeobox domain 1). Heterodimer with ZHX1 (via homeobox domain 1). Heterodimer with ZHX2 (via homeobox domain 1). Heterodimerization with ZHX1 is a prerequisite for repressor activity. Interacts with NFYA. Widely expressed.

Its subcellular location is the cytoplasm. The protein localises to the nucleus. Acts as a transcriptional repressor. Involved in the early stages of mesenchymal stem cell (MSC) osteogenic differentiation. Is a regulator of podocyte gene expression during primary glomerula disease. Binds to promoter DNA. The sequence is that of Zinc fingers and homeoboxes protein 3 (Zhx3) from Rattus norvegicus (Rat).